Reading from the N-terminus, the 748-residue chain is Structure-specific endonuclease subunit SLX4 (748 aa).

Over residues 62 to 75 (KSVTAQKSPMTQET) the composition is skewed to polar residues. A disordered region spans residues 62–104 (KSVTAQKSPMTQETTKNDTERNKDVDKSCNPVSTSHPDLGGSN). Thr-72 is modified (phosphothreonine; by ATR and ATM). The span at 76-88 (TKNDTERNKDVDK) shows a compositional bias: basic and acidic residues. Thr-113 carries the post-translational modification Phosphothreonine; by ATR and ATM. Disordered regions lie at residues 215-236 (IKTQNEGNSDKPPRARNNKGEK) and 277-303 (EKSSNSLDNQESSQQRLWTASQLPPEL). Over residues 222-236 (NSDKPPRARNNKGEK) the composition is skewed to basic and acidic residues. Over residues 277-298 (EKSSNSLDNQESSQQRLWTASQ) the composition is skewed to polar residues. Phosphoserine; by ATR and ATM is present on Ser-289. Thr-319 is subject to Phosphothreonine; by ATR and ATM. 2 positions are modified to phosphoserine; by ATR and ATM: Ser-329 and Ser-355. A compositionally biased stretch (polar residues) spans 591–602 (ISTKDSTQNPTT). Positions 591 to 610 (ISTKDSTQNPTTSNDIIDTS) are disordered.

Belongs to the SLX4 family. Forms a heterodimer with SLX1. Interacts with RAD1; catalytic subunit of the RAD1-RAD10 endonuclease. Interacts with RTT107. Phosphorylated by ATR (MEC1) and ATM (TEL1) upon DNA damage. This appears to be required for the function with the RAD1-RAD10 endonuclease.

The protein localises to the nucleus. Its subcellular location is the cytoplasm. Its function is as follows. Regulatory subunit that interacts with and increases the activity of different structure-specific endonucleases. Has several distinct roles in protecting genome stability by resolving diverse forms of deleterious DNA structures. Component of the SLX1-SLX4 structure-specific endonuclease that resolves DNA secondary structures generated during DNA repair and recombination. Has endonuclease activity towards branched DNA substrates, introducing single-strand cuts in duplex DNA close to junctions with ss-DNA. Has a preference for simple Y, 5'-flap and replication fork-like structures. It cleaves the strand bearing the 5'-non-homologous arm at the branch site junction and generates ligatable, nicked products from the 5'-flap or replication fork substrates. Plays a critical role in maintaining the integrity of the ribosomal DNA (rDNA) loci, where it has a role in re-starting stalled replication forks. Has Holliday junction resolvase activity in vitro. Interacts with the structure-specific RAD1-RAD10 endonuclease and promotes RAD1-RAD10-dependent 3'-non-homologous tail removal (NHTR) during repair of double-strand breaks by single-strand annealing. SLX4 also promotes recovery from DNA-alkylation-induced replisome stalling during DNA replication by facilitating the error-free mode of lesion bypass. This does not require SLX1 or RAD1-RAD10, but probably RTT107. This Saccharomyces cerevisiae (strain RM11-1a) (Baker's yeast) protein is Structure-specific endonuclease subunit SLX4.